The following is a 552-amino-acid chain: MGKIAEFLGNPGARPDVHHRAPTVDCKQYEEFGDSNDYKNDDVVRVVSHSDESTDDELCNVNLTETGAIFTSKGFTGLSKGFTDKTLDFLVRVAGSQAVFFIVWIILIIWVVIGIVYNAPFNWQVVMQDGQSIQSYVWDTLLMRQQLMSTHEQILICGRLKSRLASFKNYLTRSTPEEEKADCTVEANEVSSVENHIDPSAINGELPVENWYDRLSNVASRYMGSIAAMVIFWIGIFVWIGCGAIPKDAGNTPPYTGETTGSNPRLKKFSDAWQMYINTAVAVSLLICTTFLQNIRARHDYFTGRFLVDIFDMDEKIDYRIRKHFNDFETPHPVVTIESKKRSTGRKMIDWYADIIGTGIGVLIGVAVFATWIGIGSPMKWDDNWWLIIGTYTGLIGFLDGFVLREVYFRIVQHEEKNYSDVAKEDLELFQELGIECPEEFSGKAPEINTIGYRTSQYINRICSTPWSVLVSVIIIIGLICIASGLRWSTTGQLIANTPTMIIEEFFLLVLLQAHNWADRQRRVEVTALYARRRILLSYVEKRFPEVMMLEK.

The Extracellular segment spans residues 1–97; it reads MGKIAEFLGN…DFLVRVAGSQ (97 aa). Lysine 39 participates in a covalent cross-link: Glycyl lysine isopeptide (Lys-Gly) (interchain with G-Cter in ubiquitin). Residues serine 48 and serine 50 each carry the phosphoserine modification. The chain crosses the membrane as a helical span at residues 98–118; it reads AVFFIVWIILIIWVVIGIVYN. At 119-225 the chain is on the cytoplasmic side; the sequence is APFNWQVVMQ…SNVASRYMGS (107 aa). A helical membrane pass occupies residues 226-246; sequence IAAMVIFWIGIFVWIGCGAIP. At 247-271 the chain is on the extracellular side; sequence KDAGNTPPYTGETTGSNPRLKKFSD. A helical transmembrane segment spans residues 272-292; sequence AWQMYINTAVAVSLLICTTFL. The Cytoplasmic portion of the chain corresponds to 293 to 354; it reads QNIRARHDYF…GRKMIDWYAD (62 aa). Residues 355-375 traverse the membrane as a helical segment; that stretch reads IIGTGIGVLIGVAVFATWIGI. Over 376-383 the chain is Extracellular; it reads GSPMKWDD. Residues 384–404 form a helical membrane-spanning segment; that stretch reads NWWLIIGTYTGLIGFLDGFVL. The Cytoplasmic segment spans residues 405 to 465; sequence REVYFRIVQH…SQYINRICST (61 aa). Residues 466-486 traverse the membrane as a helical segment; sequence PWSVLVSVIIIIGLICIASGL. The Extracellular segment spans residues 487–493; the sequence is RWSTTGQ. The chain crosses the membrane as a helical span at residues 494 to 514; it reads LIANTPTMIIEEFFLLVLLQA. The Cytoplasmic portion of the chain corresponds to 515-552; that stretch reads HNWADRQRRVEVTALYARRRILLSYVEKRFPEVMMLEK.

Belongs to the FET4 family.

It is found in the membrane. Functionally, required for Fe(2+) ion low affinity uptake. This is Low-affinity Fe(2+) transport protein (FET4) from Saccharomyces cerevisiae (strain ATCC 204508 / S288c) (Baker's yeast).